A 360-amino-acid chain; its full sequence is 3-isopropylmalate dehydrogenase (360 aa).

76-89 (GPKWDTIERDIRPE) contributes to the NAD(+) binding site. Substrate contacts are provided by arginine 96, arginine 106, arginine 134, and aspartate 224. Mg(2+) is bound by residues aspartate 224, aspartate 248, and aspartate 252. 282–294 (GSAPDIAGKGIAN) is a binding site for NAD(+).

The protein belongs to the isocitrate and isopropylmalate dehydrogenases family. LeuB type 1 subfamily. In terms of assembly, homodimer. Mg(2+) is required as a cofactor. The cofactor is Mn(2+).

The protein localises to the cytoplasm. It catalyses the reaction (2R,3S)-3-isopropylmalate + NAD(+) = 4-methyl-2-oxopentanoate + CO2 + NADH. It functions in the pathway amino-acid biosynthesis; L-leucine biosynthesis; L-leucine from 3-methyl-2-oxobutanoate: step 3/4. In terms of biological role, catalyzes the oxidation of 3-carboxy-2-hydroxy-4-methylpentanoate (3-isopropylmalate) to 3-carboxy-4-methyl-2-oxopentanoate. The product decarboxylates to 4-methyl-2 oxopentanoate. The protein is 3-isopropylmalate dehydrogenase of Pseudomonas syringae pv. syringae (strain B728a).